The sequence spans 610 residues: Lipoprotein LpqB (610 aa).

The first 27 residues, 1–27 (MGAEGGGRRRALRLGAYVGCGAVLLTG), serve as a signal peptide directing secretion. The N-palmitoyl cysteine moiety is linked to residue cysteine 28. Cysteine 28 carries the S-diacylglycerol cysteine lipid modification.

This sequence belongs to the LpqB lipoprotein family.

The protein localises to the cell membrane. The polypeptide is Lipoprotein LpqB (Streptomyces avermitilis (strain ATCC 31267 / DSM 46492 / JCM 5070 / NBRC 14893 / NCIMB 12804 / NRRL 8165 / MA-4680)).